The sequence spans 292 residues: NAD kinase (292 aa).

Asp73 serves as the catalytic Proton acceptor. NAD(+)-binding positions include 73–74 (DG), 147–148 (NE), His158, Arg175, Asp177, 188–193 (TAYSLS), and Gln247.

It belongs to the NAD kinase family. It depends on a divalent metal cation as a cofactor.

It is found in the cytoplasm. It catalyses the reaction NAD(+) + ATP = ADP + NADP(+) + H(+). Its function is as follows. Involved in the regulation of the intracellular balance of NAD and NADP, and is a key enzyme in the biosynthesis of NADP. Catalyzes specifically the phosphorylation on 2'-hydroxyl of the adenosine moiety of NAD to yield NADP. This is NAD kinase from Salmonella choleraesuis (strain SC-B67).